A 565-amino-acid polypeptide reads, in one-letter code: Ubiquitin carboxyl-terminal hydrolase 39 (565 aa).

Composition is skewed to basic and acidic residues over residues 1–21 (MSGRSKRESRGSTRGKRESES) and 28–39 (VKRERDREREPE). 2 disordered regions span residues 1–61 (MSGR…SARE) and 75–96 (EREVDEDSEPEREVRAKNGRVD). At serine 46 the chain carries Phosphoserine. Lysine 51 participates in a covalent cross-link: Glycyl lysine isopeptide (Lys-Gly) (interchain with G-Cter in SUMO2). The residue at position 82 (serine 82) is a Phosphoserine. The span at 85 to 96 (EREVRAKNGRVD) shows a compositional bias: basic and acidic residues. Residues 103–200 (RHCPYLDTIN…YVLKPTFTKQ (98 aa)) form a UBP-type; degenerate zinc finger. Zn(2+) contacts are provided by cysteine 136, cysteine 139, histidine 155, and histidine 161. Residues 225 to 555 (VGLNNIKAND…EAYIQIWKRR (331 aa)) form the USP domain.

It belongs to the peptidase C19 family. In terms of assembly, the U4/U6-U5 tri-snRNP complex is a building block of the precatalytic spliceosome (spliceosome B complex). Component of the U4/U6-U5 tri-snRNP complex composed of the U4, U6 and U5 snRNAs and at least PRPF3, PRPF4, PRPF6, PRPF8, PRPF31, SNRNP200, TXNL4A, SNRNP40, SNRPB, SNRPD1, SNRPD2, SNRPD3, SNRPE, SNRPF, SNRPG, DDX23, CD2BP2, PPIH, SNU13, EFTUD2, SART1 and USP39, plus LSM2, LSM3, LSM4, LSM5, LSM6, LSM7 and LSM8.

It localises to the nucleus. The enzyme catalyses Thiol-dependent hydrolysis of ester, thioester, amide, peptide and isopeptide bonds formed by the C-terminal Gly of ubiquitin (a 76-residue protein attached to proteins as an intracellular targeting signal).. In terms of biological role, deubiquitinating enzyme that plays a role in many cellular processes including cellular antiviral response, epithelial morphogenesis, DNA repair or B-cell development. Plays a role in pre-mRNA splicing as a component of the U4/U6-U5 tri-snRNP, one of the building blocks of the precatalytic spliceosome. Specifically regulates immunoglobulin gene rearrangement in a spliceosome-dependent manner, which involves modulating chromatin interactions at the Igh locus and therefore plays an essential role in B-cell development. Regulates AURKB mRNA levels, and thereby plays a role in cytokinesis and in the spindle checkpoint. Regulates apoptosis and G2/M cell cycle checkpoint in response to DNA damage by deubiquitinating and stabilizing CHK2. Also plays an important role in DNA repair by controlling the recruitment of XRCC4/LIG4 to DNA double-strand breaks for non-homologous end-joining repair. Participates in antiviral activity by affecting the type I IFN signaling by stabilizing STAT1 and decreasing its 'Lys-6'-linked ubiquitination. Contributes to non-canonical Wnt signaling during epidermal differentiation. Acts as a negative regulator NF-kappa-B activation through deubiquitination of 'Lys-48'-linked ubiquitination of NFKBIA. This is Ubiquitin carboxyl-terminal hydrolase 39 (USP39) from Pongo abelii (Sumatran orangutan).